Here is a 259-residue protein sequence, read N- to C-terminus: Global transcriptional regulator CodY (259 aa).

The tract at residues 1–155 (MALLQKTRKI…GATVVGMEIL (155 aa)) is GAF domain. The segment at residues 203-222 (ASKIADRVGITRSVIVNALR) is a DNA-binding region (H-T-H motif). Serine 215 carries the phosphoserine modification.

Belongs to the CodY family.

It is found in the cytoplasm. DNA-binding global transcriptional regulator which is involved in the adaptive response to starvation and acts by directly or indirectly controlling the expression of numerous genes in response to nutrient availability. During rapid exponential growth, CodY is highly active and represses genes whose products allow adaptation to nutrient depletion. The protein is Global transcriptional regulator CodY of Bacillus licheniformis (strain ATCC 14580 / DSM 13 / JCM 2505 / CCUG 7422 / NBRC 12200 / NCIMB 9375 / NCTC 10341 / NRRL NRS-1264 / Gibson 46).